Consider the following 134-residue polypeptide: RxLR effector protein Avh238 (134 aa).

The first 21 residues, 1–21, serve as a signal peptide directing secretion; it reads MRGVFFVAVAVAIFARSSAEA. Positions 44–68 match the RxLR-dEER motif; sequence RFLRVADPEDDDLAAPADDGKTEER. Residues 49 to 70 form a disordered region; the sequence is ADPEDDDLAAPADDGKTEERAP. The segment covering 61–70 has biased composition (basic and acidic residues); the sequence is DDGKTEERAP.

This sequence belongs to the RxLR effector family. Interacts with host 1-aminocyclopropane-1-carboxylate synthases ACS1, ACS2, ACS3, ACS10 and ACS12.

It localises to the secreted. Its subcellular location is the host cytoplasm. The protein localises to the host nucleus. Functionally, effector that suppresses plant defense responses during the early stages of pathogen infection. Suppresses cell death induced by effectors and PAMPs in plant hosts. Is able to induced cell death in tomato, tobacco, eggplant, and potato, but not in A.thaliana. Interacts with and destabilizes host 1-aminocyclopropane-1-carboxylate synthases. By suppressing type2 ACS-catalyzed ethylene biosynthesis, Avh238 facilitates Phytophthora infection. In Phytophthora sojae (strain P6497) (Soybean stem and root rot agent), this protein is RxLR effector protein Avh238 (Avh238).